A 180-amino-acid chain; its full sequence is ATP synthase subunit delta (180 aa).

The protein belongs to the ATPase delta chain family. F-type ATPases have 2 components, F(1) - the catalytic core - and F(0) - the membrane proton channel. F(1) has five subunits: alpha(3), beta(3), gamma(1), delta(1), epsilon(1). F(0) has three main subunits: a(1), b(2) and c(10-14). The alpha and beta chains form an alternating ring which encloses part of the gamma chain. F(1) is attached to F(0) by a central stalk formed by the gamma and epsilon chains, while a peripheral stalk is formed by the delta and b chains.

The protein resides in the cell membrane. Functionally, f(1)F(0) ATP synthase produces ATP from ADP in the presence of a proton or sodium gradient. F-type ATPases consist of two structural domains, F(1) containing the extramembraneous catalytic core and F(0) containing the membrane proton channel, linked together by a central stalk and a peripheral stalk. During catalysis, ATP synthesis in the catalytic domain of F(1) is coupled via a rotary mechanism of the central stalk subunits to proton translocation. Its function is as follows. This protein is part of the stalk that links CF(0) to CF(1). It either transmits conformational changes from CF(0) to CF(1) or is implicated in proton conduction. This chain is ATP synthase subunit delta, found in Ligilactobacillus salivarius (strain UCC118) (Lactobacillus salivarius).